The following is a 337-amino-acid chain: N-acetyl-gamma-glutamyl-phosphate reductase (337 aa).

Residue Cys-145 is part of the active site.

It belongs to the NAGSA dehydrogenase family. Type 1 subfamily.

It is found in the cytoplasm. It catalyses the reaction N-acetyl-L-glutamate 5-semialdehyde + phosphate + NADP(+) = N-acetyl-L-glutamyl 5-phosphate + NADPH + H(+). The protein operates within amino-acid biosynthesis; L-arginine biosynthesis; N(2)-acetyl-L-ornithine from L-glutamate: step 3/4. Functionally, catalyzes the NADPH-dependent reduction of N-acetyl-5-glutamyl phosphate to yield N-acetyl-L-glutamate 5-semialdehyde. The polypeptide is N-acetyl-gamma-glutamyl-phosphate reductase (Methanosarcina barkeri (strain Fusaro / DSM 804)).